The sequence spans 546 residues: Zinc finger and BTB domain-containing protein 7A (546 aa).

The region spanning 34–101 (CDVVILVEGQ…AYTATLTVST (68 aa)) is the BTB domain. Positions 189 to 288 (QEDEEEPDCN…SFVPTGAEAE (100 aa)) are disordered. 3 consecutive C2H2-type zinc fingers follow at residues 359-381 (QKCPICAKVIQGAGKLPRHIRTH), 387-409 (YECNICNVRFTRQDKLKVHMRKH), and 415-437 (YLCQQCGAAFAHNYDLKNHMRVH). The segment at 443-467 (YQCDSCFKTFVRSDHLHRHLKKDGC) adopts a C2H2-type 4; atypical zinc-finger fold. The disordered stretch occupies residues 463–546 (KKDGCNGIPS…AAEGSAPGPS (84 aa)). Low complexity predominate over residues 534–546 (AGGAAEGSAPGPS).

It is found in the nucleus. Transcription factor that represses the transcription of a wide range of genes involved in cell proliferation and differentiation. Directly and specifically binds to the consensus sequence 5'-[GA][CA]GACCCCCCCCC-3' and represses transcription both by regulating the organization of chromatin and through the direct recruitment of transcription factors to gene regulatory regions. May also play a role, independently of its transcriptional activity, in double-strand break repair via classical non-homologous end joining/cNHEJ and in alternative splicing. The sequence is that of Zinc finger and BTB domain-containing protein 7A from Gallus gallus (Chicken).